We begin with the raw amino-acid sequence, 406 residues long: Eukaryotic initiation factor 4A-I (406 aa).

The interval 1–21 (MSASQDSRSRDNGPDGMEPEG) is disordered. Ser2 is modified (N-acetylserine). Ser4 carries the post-translational modification Phosphoserine. The Q motif motif lies at 32-60 (DSFDDMNLSESLLRGIYAYGFEKPSAIQQ). One can recognise a Helicase ATP-binding domain in the interval 63-234 (ILPCIKGYDV…KKFMRDPIRI (172 aa)). Residue 76-83 (AQSGTGKT) coordinates ATP. Lys118 carries the N6-acetyllysine modification. Lys146 participates in a covalent cross-link: Glycyl lysine isopeptide (Lys-Gly) (interchain with G-Cter in SUMO2). Phosphothreonine is present on Thr158. Lys174 is modified (N6-acetyllysine). The short motif at 182 to 185 (DEAD) is the DEAD box element. Lys193 is subject to N6-acetyllysine. Lys225 is covalently cross-linked (Glycyl lysine isopeptide (Lys-Gly) (interchain with G-Cter in SUMO2)). Position 238 is an N6-acetyllysine; alternate (Lys238). Residue Lys238 forms a Glycyl lysine isopeptide (Lys-Gly) (interchain with G-Cter in SUMO2); alternate linkage. The Helicase C-terminal domain maps to 245-406 (GIRQFYINVE…EMPLNVADLI (162 aa)). Glycyl lysine isopeptide (Lys-Gly) (interchain with G-Cter in SUMO2) cross-links involve residues Lys309, Lys369, and Lys381.

This sequence belongs to the DEAD box helicase family. eIF4A subfamily. As to quaternary structure, eIF4F is a multi-subunit complex, the composition of which varies with external and internal environmental conditions. It is composed of at least EIF4A, EIF4E and EIF4G1/EIF4G3. Interacts with PAIP1, EIF4E and UPF2. Found in a complex with XPO7, EIF4A1, ARHGAP1, VPS26A, VPS29, VPS35 and SFN. May interact with NOM1. Interacts with PDCD4; this interferes with the interaction between EIF4A and EIF4G. Interacts with RBM4. Interacts with DDX3X in an RNA-independent manner. Interacts with PKP1 (via N-terminus); the interaction promotes EIF4A1 recruitment to the cap-dependent translation complex and EIF4A1 ATPase activity.

It localises to the cytoplasm. It is found in the perinuclear region. The protein resides in the cell membrane. Its subcellular location is the stress granule. The catalysed reaction is ATP + H2O = ADP + phosphate + H(+). Its function is as follows. ATP-dependent RNA helicase which is a subunit of the eIF4F complex involved in cap recognition and is required for mRNA binding to ribosome. In the current model of translation initiation, eIF4A unwinds RNA secondary structures in the 5'-UTR of mRNAs which is necessary to allow efficient binding of the small ribosomal subunit, and subsequent scanning for the initiator codon. As a result, promotes cell proliferation and growth. This chain is Eukaryotic initiation factor 4A-I (EIF4A1), found in Bos taurus (Bovine).